A 453-amino-acid chain; its full sequence is Crh-like protein CRH11 (453 aa).

Positions 1 to 21 are cleaved as a signal peptide; it reads MKFTTLATIASTLLFAANANA. Cysteines 24 and 32 form a disulfide. The 200-residue stretch at 28 to 227 folds into the GH16 domain; it reads KSSDCSPVPA…WAGGITDYSQ (200 aa). Glutamate 119 functions as the Nucleophile in the catalytic mechanism. The active-site Proton donor is glutamate 123. Chitin contacts are provided by glutamate 123, tryptophan 204, and threonine 215. Disordered regions lie at residues 281–343, 362–397, and 410–430; these read LESG…SEKS, KTTV…PASA, and GDAA…TENN. Composition is skewed to low complexity over residues 286–343, 363–397, and 412–425; these read SVDS…SEKS, TTVT…PASA, and AAPS…PSVS. N-linked (GlcNAc...) asparagine glycosylation is present at asparagine 290. The GPI-anchor amidated asparagine moiety is linked to residue asparagine 430. The propeptide at 431 to 453 is removed in mature form; the sequence is GAVSVAKTTSLFGFVALIGFLFV.

Belongs to the glycosyl hydrolase 16 family. CRH1 subfamily. In terms of processing, the GPI-anchor is attached to the protein in the endoplasmic reticulum and serves to target the protein to the cell surface. There, the glucosamine-inositol phospholipid moiety is cleaved off and the GPI-modified mannoprotein is covalently attached via its lipidless GPI glycan remnant to the 1,6-beta-glucan of the outer cell wall layer.

The protein localises to the secreted. It localises to the cell wall. The protein resides in the membrane. It catalyses the reaction Random endo-hydrolysis of N-acetyl-beta-D-glucosaminide (1-&gt;4)-beta-linkages in chitin and chitodextrins.. Functionally, dual chitinase/transglycosylase that plays a role in cell wall architecture. Chitinase and transglycosylase activities are coupled. Required for the polysaccharide cross-linking at the septa and the cell wall. More specifically, transfers chitin to 1,6-beta-glucan in the cell wall. Plays an important role in fungal pathogenesis via its functions in cell wall assembly and regeneration, filamentation, and adherence to host cells. The polypeptide is Crh-like protein CRH11 (CRH11) (Candida albicans (strain SC5314 / ATCC MYA-2876) (Yeast)).